Consider the following 355-residue polypeptide: Tryptophan--tRNA ligase (355 aa).

ATP-binding positions include 13–15 (QPT) and 21–22 (GN). The 'HIGH' region signature appears at 14-22 (PTGNLHLGN). Aspartate 137 contributes to the L-tryptophan binding site. Residues 149–151 (GED), isoleucine 208, and 217–221 (KMSKS) contribute to the ATP site. Positions 217–221 (KMSKS) match the 'KMSKS' region motif.

It belongs to the class-I aminoacyl-tRNA synthetase family. Homodimer.

It is found in the cytoplasm. It carries out the reaction tRNA(Trp) + L-tryptophan + ATP = L-tryptophyl-tRNA(Trp) + AMP + diphosphate + H(+). Functionally, catalyzes the attachment of tryptophan to tRNA(Trp). This is Tryptophan--tRNA ligase from Mesorhizobium japonicum (strain LMG 29417 / CECT 9101 / MAFF 303099) (Mesorhizobium loti (strain MAFF 303099)).